A 324-amino-acid chain; its full sequence is tRNA uridine(34) hydroxylase (324 aa).

The region spanning 145–239 (NDKKTIFIDM…YVHDARKNGL (95 aa)) is the Rhodanese domain. Cys-199 (cysteine persulfide intermediate) is an active-site residue.

The protein belongs to the TrhO family.

The catalysed reaction is uridine(34) in tRNA + AH2 + O2 = 5-hydroxyuridine(34) in tRNA + A + H2O. Its function is as follows. Catalyzes oxygen-dependent 5-hydroxyuridine (ho5U) modification at position 34 in tRNAs. The chain is tRNA uridine(34) hydroxylase from Buchnera aphidicola subsp. Acyrthosiphon pisum (strain Tuc7).